A 172-amino-acid polypeptide reads, in one-letter code: Phosphopantetheine adenylyltransferase (172 aa).

S9 is a substrate binding site. ATP is bound by residues 9–10 (SF) and H17. Substrate contacts are provided by K41, L78, and R92. Residues 93–95 (GLR), E103, and 128–134 (GRAITST) contribute to the ATP site.

Belongs to the bacterial CoaD family. Homohexamer. The cofactor is Mg(2+).

Its subcellular location is the cytoplasm. It carries out the reaction (R)-4'-phosphopantetheine + ATP + H(+) = 3'-dephospho-CoA + diphosphate. It participates in cofactor biosynthesis; coenzyme A biosynthesis; CoA from (R)-pantothenate: step 4/5. Functionally, reversibly transfers an adenylyl group from ATP to 4'-phosphopantetheine, yielding dephospho-CoA (dPCoA) and pyrophosphate. The chain is Phosphopantetheine adenylyltransferase from Bartonella quintana (strain Toulouse) (Rochalimaea quintana).